A 530-amino-acid chain; its full sequence is Glucocorticoid modulatory element-binding protein 2 (530 aa).

One can recognise an SAND domain in the interval 81–163 (EEGENLEAEI…RKIMDSGELD (83 aa)). Cys110 contacts Zn(2+). DNA is bound by residues Lys136, Lys140, Lys143, and Arg154. Lys155 participates in a covalent cross-link: Glycyl lysine isopeptide (Lys-Gly) (interchain with G-Cter in SUMO1); alternate. Lys155 participates in a covalent cross-link: Glycyl lysine isopeptide (Lys-Gly) (interchain with G-Cter in SUMO2); alternate. Residues His167, Cys171, and Cys175 each contribute to the Zn(2+) site. Residues 304-348 (QMDRSREQYARDLAALEQQCDEHRRRAKELKHKSQHLSNVLMTLT) adopt a coiled-coil conformation. Ser373 bears the Phosphoserine mark.

In terms of assembly, homodimer, and heterodimer of GMEB1 and GMEB2. GMEB1 and GMEB2 form the parvovirus initiator complex (PIF). Interacts with the glucocorticoid receptor (NR3C1). May interact with CREB-binding protein (CBP). As to expression, expressed in peripheral blood lymphocytes and fetal liver. Expressed preferentially in reproductive and/or developmentally important cells, such as testis, placenta, bone marrow and fetal tissues.

It is found in the nucleus. The protein localises to the cytoplasm. Trans-acting factor that binds to glucocorticoid modulatory elements (GME) present in the TAT (tyrosine aminotransferase) promoter and increases sensitivity to low concentrations of glucocorticoids. Also binds to the transferrin receptor promoter. Essential auxiliary factor for the replication of parvoviruses. This is Glucocorticoid modulatory element-binding protein 2 (GMEB2) from Homo sapiens (Human).